Consider the following 282-residue polypeptide: Bis(5'-nucleosyl)-tetraphosphatase, symmetrical (282 aa).

It belongs to the Ap4A hydrolase family.

The catalysed reaction is P(1),P(4)-bis(5'-adenosyl) tetraphosphate + H2O = 2 ADP + 2 H(+). In terms of biological role, hydrolyzes diadenosine 5',5'''-P1,P4-tetraphosphate to yield ADP. This Escherichia coli O45:K1 (strain S88 / ExPEC) protein is Bis(5'-nucleosyl)-tetraphosphatase, symmetrical.